Reading from the N-terminus, the 1196-residue chain is DNA-directed RNA polymerase subunit beta (1196 aa).

Belongs to the RNA polymerase beta chain family. In terms of assembly, the RNAP catalytic core consists of 2 alpha, 1 beta, 1 beta' and 1 omega subunit. When a sigma factor is associated with the core the holoenzyme is formed, which can initiate transcription.

It carries out the reaction RNA(n) + a ribonucleoside 5'-triphosphate = RNA(n+1) + diphosphate. Its function is as follows. DNA-dependent RNA polymerase catalyzes the transcription of DNA into RNA using the four ribonucleoside triphosphates as substrates. The protein is DNA-directed RNA polymerase subunit beta of Lactococcus lactis subsp. cremoris (strain SK11).